The sequence spans 208 residues: AN1-type zinc finger protein 6 (208 aa).

The segment at 8–42 adopts an A20-type zinc-finger fold; it reads SQVPMLCSTGCGFYGNPRTNGMCSVCYKEHLQRQN. Zn(2+)-binding residues include cysteine 14, cysteine 18, cysteine 30, and cysteine 33. The disordered stretch occupies residues 41–110; that stretch reads QNSSNGRISP…ASSQVDSTSV (70 aa). At serine 49 the chain carries Phosphoserine. Residues 54 to 68 are compositionally biased toward polar residues; sequence SVTSLSESLPVQCTD. Over residues 83–94 the composition is skewed to low complexity; it reads SSVQPSPVSNQS. Polar residues predominate over residues 95-110; sequence LLSESVASSQVDSTSV. The AN1-type zinc finger occupies 143–189; the sequence is KQKKNRCFMCRKKVGLTGFECRCGNVYCGVHRYSDVHNCSYNYKADA. Positions 149, 152, 163, 165, 170, 173, 179, and 181 each coordinate Zn(2+). Position 204 is an N6-acetyllysine (lysine 204).

Interacts with PKN1.

The protein is AN1-type zinc finger protein 6 (ZFAND6) of Bos taurus (Bovine).